The following is a 274-amino-acid chain: Undecaprenyl-diphosphatase (274 aa).

The next 8 membrane-spanning stretches (helical) occupy residues 4–24, 46–66, 86–106, 109–129, 145–165, 188–208, 214–234, and 250–270; these read LLVI…LLPI, VVFE…EYRV, INVA…SDFI, VLFS…IIMW, ISYA…IPGT, FSFF…LWEA, IEDM…TFAV, and FAWY…TGVI.

The protein belongs to the UppP family.

It is found in the cell inner membrane. The catalysed reaction is di-trans,octa-cis-undecaprenyl diphosphate + H2O = di-trans,octa-cis-undecaprenyl phosphate + phosphate + H(+). Functionally, catalyzes the dephosphorylation of undecaprenyl diphosphate (UPP). Confers resistance to bacitracin. The chain is Undecaprenyl-diphosphatase from Cellvibrio japonicus (strain Ueda107) (Pseudomonas fluorescens subsp. cellulosa).